Reading from the N-terminus, the 374-residue chain is C-X-C chemokine receptor type 5 (374 aa).

Residues 1–57 lie on the Extracellular side of the membrane; sequence MNYPLTLDMGSITYNMDDLYKELAFYSNSTEIPLQDSNFCSTVEGPLLTSFKAVFMP. Asn28 carries an N-linked (GlcNAc...) asparagine glycan. The chain crosses the membrane as a helical span at residues 58–78; the sequence is VAYSLIFLLGMMGNILVLVIL. Over 79–90 the chain is Cytoplasmic; sequence ERHRHTRSSTET. The helical transmembrane segment at 91–111 threads the bilayer; sequence FLFHLAVADLLLVFILPFAVA. Residues 112–126 lie on the Extracellular side of the membrane; it reads EGSVGWVLGTFLCKT. Cys124 and Cys204 form a disulfide bridge. Residues 127–147 form a helical membrane-spanning segment; the sequence is VIALHKINFYCSSLLLACIAV. Topologically, residues 148-169 are cytoplasmic; it reads DRYLAIVHAVHAYRRRRLLSIH. The chain crosses the membrane as a helical span at residues 170–190; the sequence is ITCTAIWLAGFLFALPELLFA. Residues 191–221 lie on the Extracellular side of the membrane; sequence KVGQPHNNDSLPQCTFSQENEAETRAWFTSR. N-linked (GlcNAc...) asparagine glycosylation occurs at Asn198. The helical transmembrane segment at 222–242 threads the bilayer; the sequence is FLYHIGGFLLPMLVMGWCYVG. Residues 243 to 261 are Cytoplasmic-facing; it reads VVHRLLQAQRRPQRQKAVR. Residues 262–282 traverse the membrane as a helical segment; it reads VAILVTSIFFLCWSPYHIVIF. Residues 283 to 306 lie on the Extracellular side of the membrane; that stretch reads LDTLERLKAVNSSCELSGYLSVAI. A helical transmembrane segment spans residues 307-327; that stretch reads TLCEFLGLAHCCLNPMLYTFA. The Cytoplasmic portion of the chain corresponds to 328 to 374; sequence GVKFRSDLSRLLTKLGCAGPASLCQLFPNWRKSSLSESENATSLTTF.

It belongs to the G-protein coupled receptor 1 family. In terms of tissue distribution, mainly in spleen, in resting B-cells.

The protein resides in the cell membrane. Its function is as follows. Cytokine receptor that binds to B-lymphocyte chemoattractant (BLC). Involved in B-cell migration into B-cell follicles of spleen and Peyer patches but not into those of mesenteric or peripheral lymph nodes. This is C-X-C chemokine receptor type 5 (Cxcr5) from Mus musculus (Mouse).